The following is a 196-amino-acid chain: ATP-dependent Clp protease proteolytic subunit (196 aa).

S101 serves as the catalytic Nucleophile. The active site involves H126.

Belongs to the peptidase S14 family. As to quaternary structure, component of the chloroplastic Clp protease core complex.

The protein localises to the plastid. It localises to the chloroplast stroma. It carries out the reaction Hydrolysis of proteins to small peptides in the presence of ATP and magnesium. alpha-casein is the usual test substrate. In the absence of ATP, only oligopeptides shorter than five residues are hydrolyzed (such as succinyl-Leu-Tyr-|-NHMec, and Leu-Tyr-Leu-|-Tyr-Trp, in which cleavage of the -Tyr-|-Leu- and -Tyr-|-Trp bonds also occurs).. Its function is as follows. Cleaves peptides in various proteins in a process that requires ATP hydrolysis. Has a chymotrypsin-like activity. Plays a major role in the degradation of misfolded proteins. The protein is ATP-dependent Clp protease proteolytic subunit of Lotus japonicus (Lotus corniculatus var. japonicus).